A 391-amino-acid polypeptide reads, in one-letter code: 1-deoxy-D-xylulose 5-phosphate reductoisomerase (391 aa).

The NADPH site is built by threonine 11, glycine 12, serine 13, isoleucine 14, glycine 37, asparagine 39, and asparagine 125. Lysine 126 provides a ligand contact to 1-deoxy-D-xylulose 5-phosphate. Glutamate 127 is a binding site for NADPH. Aspartate 151 serves as a coordination point for Mn(2+). The 1-deoxy-D-xylulose 5-phosphate site is built by serine 152, glutamate 153, serine 176, and histidine 199. A Mn(2+)-binding site is contributed by glutamate 153. An NADPH-binding site is contributed by glycine 205. 4 residues coordinate 1-deoxy-D-xylulose 5-phosphate: serine 212, asparagine 217, lysine 218, and glutamate 221. Residue glutamate 221 participates in Mn(2+) binding.

This sequence belongs to the DXR family. Requires Mg(2+) as cofactor. Mn(2+) serves as cofactor.

It catalyses the reaction 2-C-methyl-D-erythritol 4-phosphate + NADP(+) = 1-deoxy-D-xylulose 5-phosphate + NADPH + H(+). It functions in the pathway isoprenoid biosynthesis; isopentenyl diphosphate biosynthesis via DXP pathway; isopentenyl diphosphate from 1-deoxy-D-xylulose 5-phosphate: step 1/6. Its function is as follows. Catalyzes the NADPH-dependent rearrangement and reduction of 1-deoxy-D-xylulose-5-phosphate (DXP) to 2-C-methyl-D-erythritol 4-phosphate (MEP). This is 1-deoxy-D-xylulose 5-phosphate reductoisomerase from Heliobacterium modesticaldum (strain ATCC 51547 / Ice1).